We begin with the raw amino-acid sequence, 186 residues long: Translation initiation factor IF-3 (186 aa).

The interval 1-20 (MINRSAGKDRDRSRSGDKEL) is disordered.

The protein belongs to the IF-3 family. Monomer.

The protein localises to the cytoplasm. Functionally, IF-3 binds to the 30S ribosomal subunit and shifts the equilibrium between 70S ribosomes and their 50S and 30S subunits in favor of the free subunits, thus enhancing the availability of 30S subunits on which protein synthesis initiation begins. The sequence is that of Translation initiation factor IF-3 from Borrelia hermsii (strain HS1 / DAH).